Here is a 209-residue protein sequence, read N- to C-terminus: Large ribosomal subunit protein uL3 (209 aa).

The disordered stretch occupies residues A119 to M145.

The protein belongs to the universal ribosomal protein uL3 family. In terms of assembly, part of the 50S ribosomal subunit. Forms a cluster with proteins L14 and L19.

Functionally, one of the primary rRNA binding proteins, it binds directly near the 3'-end of the 23S rRNA, where it nucleates assembly of the 50S subunit. The protein is Large ribosomal subunit protein uL3 of Staphylococcus aureus (strain COL).